The primary structure comprises 256 residues: uncharacterized protein (256 aa).

The N-terminal stretch at M1 to G22 is a signal peptide. Residue C23 is the site of N-palmitoyl cysteine attachment. Residue C23 is the site of S-diacylglycerol cysteine attachment.

The protein belongs to the staphylococcal tandem lipoprotein family.

It localises to the cell membrane. This is an uncharacterized protein from Staphylococcus aureus (strain bovine RF122 / ET3-1).